Reading from the N-terminus, the 403-residue chain is GTPase Obg (403 aa).

In terms of domain architecture, Obg spans 1-159; sequence MKFIDESLIR…RDLLLELMLL (159 aa). The 174-residue stretch at 160-333 folds into the OBG-type G domain; that stretch reads ADVGMLGFPN…LCRDIMDFII (174 aa). Residues 166–173, 191–195, 213–216, 283–286, and 314–316 each bind GTP; these read GFPNAGKS, FTTLV, DIPG, NKID, and SAA. Residues Ser-173 and Thr-193 each contribute to the Mg(2+) site. The tract at residues 363 to 403 is disordered; sequence EYQFDDDEDWDDDWTEEDDDEDWDDDWTEEDDEGIEFIYKP. The span at 365 to 397 shows a compositional bias: acidic residues; that stretch reads QFDDDEDWDDDWTEEDDDEDWDDDWTEEDDEGI.

It belongs to the TRAFAC class OBG-HflX-like GTPase superfamily. OBG GTPase family. In terms of assembly, monomer. Mg(2+) is required as a cofactor.

It is found in the cytoplasm. Functionally, an essential GTPase which binds GTP, GDP and possibly (p)ppGpp with moderate affinity, with high nucleotide exchange rates and a fairly low GTP hydrolysis rate. Plays a role in control of the cell cycle, stress response, ribosome biogenesis and in those bacteria that undergo differentiation, in morphogenesis control. The polypeptide is GTPase Obg (Haemophilus influenzae (strain PittEE)).